We begin with the raw amino-acid sequence, 196 residues long: GTP cyclohydrolase-2 (196 aa).

Residue 49 to 53 (RVHSE) coordinates GTP. Residues cysteine 54, cysteine 65, and cysteine 67 each contribute to the Zn(2+) site. GTP-binding positions include glutamine 70, 92 to 94 (EGR), and threonine 114. The active-site Proton acceptor is the aspartate 126. Arginine 128 serves as the catalytic Nucleophile. Residues threonine 149 and lysine 154 each coordinate GTP.

Belongs to the GTP cyclohydrolase II family. In terms of assembly, homodimer. Requires Zn(2+) as cofactor.

It catalyses the reaction GTP + 4 H2O = 2,5-diamino-6-hydroxy-4-(5-phosphoribosylamino)-pyrimidine + formate + 2 phosphate + 3 H(+). It participates in cofactor biosynthesis; riboflavin biosynthesis; 5-amino-6-(D-ribitylamino)uracil from GTP: step 1/4. In terms of biological role, catalyzes the conversion of GTP to 2,5-diamino-6-ribosylamino-4(3H)-pyrimidinone 5'-phosphate (DARP), formate and pyrophosphate. In Shigella boydii serotype 18 (strain CDC 3083-94 / BS512), this protein is GTP cyclohydrolase-2.